The primary structure comprises 318 residues: GTP cyclohydrolase MptA (318 aa).

It belongs to the GTP cyclohydrolase IV family. In terms of assembly, homodimer. Requires Fe(2+) as cofactor.

The catalysed reaction is GTP + H2O = 7,8-dihydroneopterin 2',3'-cyclic phosphate + formate + diphosphate + H(+). It participates in cofactor biosynthesis; 5,6,7,8-tetrahydromethanopterin biosynthesis. Its function is as follows. Converts GTP to 7,8-dihydro-D-neopterin 2',3'-cyclic phosphate, the first intermediate in the biosynthesis of coenzyme methanopterin. This Methanosarcina mazei (strain ATCC BAA-159 / DSM 3647 / Goe1 / Go1 / JCM 11833 / OCM 88) (Methanosarcina frisia) protein is GTP cyclohydrolase MptA.